The following is a 270-amino-acid chain: uncharacterized protein (270 aa).

The N-terminal stretch at 1 to 22 (MEYIKKIALYMSVLLLIIFIGG) is a signal peptide. C23 carries the N-palmitoyl cysteine lipid modification. A lipid anchor (S-diacylglycerol cysteine) is attached at C23.

It belongs to the staphylococcal tandem lipoprotein family.

It is found in the cell membrane. This is an uncharacterized protein from Staphylococcus aureus (strain NCTC 8325 / PS 47).